A 332-amino-acid polypeptide reads, in one-letter code: D-amino acid oxidase (332 aa).

Alanine 8, glycine 9, isoleucine 10, threonine 39, threonine 40, alanine 45, glycine 46, leucine 47, valine 161, and serine 180 together coordinate FAD. 2 residues coordinate D-proline: tyrosine 218 and arginine 274. Positions 218 and 274 each coordinate D-serine. FAD is bound by residues arginine 274, glycine 305, glycine 306, glycine 308, and threonine 310. Glycine 306 provides a ligand contact to D-proline. Residue glycine 306 coordinates D-serine. The Microbody targeting signal signature appears at 330 to 332 (AKL).

It belongs to the DAMOX/DASOX family. The cofactor is FAD.

Its subcellular location is the peroxisome matrix. The catalysed reaction is a D-alpha-amino acid + O2 + H2O = a 2-oxocarboxylate + H2O2 + NH4(+). It carries out the reaction D-alanine + O2 + H2O = pyruvate + H2O2 + NH4(+). The enzyme catalyses D-arginine + O2 + H2O = 5-guanidino-2-oxopentanoate + H2O2 + NH4(+). It catalyses the reaction D-asparagine + O2 + H2O = 2-oxosuccinamate + H2O2 + NH4(+). The catalysed reaction is D-cysteine + O2 + H2O = 2-oxo-3-sulfanylpropanoate + H2O2 + NH4(+). It carries out the reaction D-glutamine + O2 + H2O = 2-oxoglutaramate + H2O2 + NH4(+). The enzyme catalyses D-isoleucine + O2 + H2O = (R)-3-methyl-2-oxopentanoate + H2O2 + NH4(+). It catalyses the reaction D-leucine + O2 + H2O = 4-methyl-2-oxopentanoate + H2O2 + NH4(+). The catalysed reaction is D-lysine + O2 + H2O = 6-amino-2-oxohexanoate + H2O2 + NH4(+). It carries out the reaction D-methionine + O2 + H2O = 4-methylsulfanyl-2-oxobutanoate + H2O2 + NH4(+). The enzyme catalyses D-phenylalanine + O2 + H2O = 3-phenylpyruvate + H2O2 + NH4(+). It catalyses the reaction D-proline + O2 = 1-pyrroline-2-carboxylate + H2O2. The catalysed reaction is D-valine + O2 + H2O = 3-methyl-2-oxobutanoate + H2O2 + NH4(+). It carries out the reaction D-histidine + O2 + H2O = 3-(imidazol-5-yl)pyruvate + H2O2 + NH4(+). The enzyme catalyses D-tyrosine + O2 + H2O = 3-(4-hydroxyphenyl)pyruvate + H2O2 + NH4(+). It catalyses the reaction D-serine + O2 + H2O = 3-hydroxypyruvate + H2O2 + NH4(+). The catalysed reaction is D-threonine + O2 + H2O = (S)-3-hydroxy-2-oxobutanoate + H2O2 + NH4(+). It carries out the reaction D-tryptophan + O2 + H2O = indole-3-pyruvate + H2O2 + NH4(+). Functionally, catalyzes the oxidative deamination of D-amino acids with broad substrate specificity. Could be responsible for the degradation of diet-derived D-alanine in the intestine. Maintains the asexual state of worms and represses early ovarian development. Following sexual induction, the enzyme is required for differentiation of oogonia into oocytes in the developing ovaries. This is D-amino acid oxidase from Dugesia ryukyuensis (Freshwater planarian flatworm).